The following is a 137-amino-acid chain: Large ribosomal subunit protein uL16 (137 aa).

It belongs to the universal ribosomal protein uL16 family. In terms of assembly, part of the 50S ribosomal subunit.

Functionally, binds 23S rRNA and is also seen to make contacts with the A and possibly P site tRNAs. The protein is Large ribosomal subunit protein uL16 of Acinetobacter baylyi (strain ATCC 33305 / BD413 / ADP1).